Here is a 248-residue protein sequence, read N- to C-terminus: 2,3-bisphosphoglycerate-dependent phosphoglycerate mutase (248 aa).

Substrate is bound by residues Arg8–Asn15, Thr21–Gly22, Arg60, Glu87–Tyr90, Lys98, Arg114–Arg115, and Gly183–Asn184. The Tele-phosphohistidine intermediate role is filled by His9. Glu87 serves as the catalytic Proton donor/acceptor.

This sequence belongs to the phosphoglycerate mutase family. BPG-dependent PGAM subfamily. Homodimer.

The catalysed reaction is (2R)-2-phosphoglycerate = (2R)-3-phosphoglycerate. Its pathway is carbohydrate degradation; glycolysis; pyruvate from D-glyceraldehyde 3-phosphate: step 3/5. Catalyzes the interconversion of 2-phosphoglycerate and 3-phosphoglycerate. In Paraburkholderia phytofirmans (strain DSM 17436 / LMG 22146 / PsJN) (Burkholderia phytofirmans), this protein is 2,3-bisphosphoglycerate-dependent phosphoglycerate mutase.